The primary structure comprises 326 residues: Nitrogen metabolite regulation-like protein bik4 (326 aa).

Residues Gly-13 to Val-18 and Phe-161 to Asn-164 each bind NADP(+).

Belongs to the NmrA-type oxidoreductase family.

Its function is as follows. Nitrogen metabolite regulation-like protein involved in the regulation of the gene cluster that mediates the biosynthesis of bikaverin, a red pigment also considered as a mycotoxin. The chain is Nitrogen metabolite regulation-like protein bik4 from Gibberella fujikuroi (strain CBS 195.34 / IMI 58289 / NRRL A-6831) (Bakanae and foot rot disease fungus).